The chain runs to 292 residues: Transcription antiterminator LacT (292 aa).

2 consecutive PRD domains span residues 66–170 (NIPI…DDGE) and 172–284 (VFGK…APAQ).

This sequence belongs to the transcriptional antiterminator BglG family.

In terms of biological role, mediates positive regulation of the lac operon by functioning as an antiterminator factor of transcription. This chain is Transcription antiterminator LacT (lacT), found in Lacticaseibacillus casei (Lactobacillus casei).